Reading from the N-terminus, the 455-residue chain is Phosphoglucosamine mutase (455 aa).

The active-site Phosphoserine intermediate is the Ser-106. Mg(2+)-binding residues include Ser-106, Asp-245, Asp-247, and Asp-249. Phosphoserine is present on Ser-106.

The protein belongs to the phosphohexose mutase family. Mg(2+) serves as cofactor. Post-translationally, activated by phosphorylation.

The catalysed reaction is alpha-D-glucosamine 1-phosphate = D-glucosamine 6-phosphate. Its function is as follows. Catalyzes the conversion of glucosamine-6-phosphate to glucosamine-1-phosphate. This chain is Phosphoglucosamine mutase, found in Acaryochloris marina (strain MBIC 11017).